Here is a 94-residue protein sequence, read N- to C-terminus: Enhancer of yellow 2 transcription factor (94 aa).

Belongs to the ENY2 family. In terms of assembly, component of the nuclear pore complex (NPC)-associated AMEX complex (anchoring and mRNA export complex), composed of at least e(y)2 and xmas-2. Component of the SAGA transcription coactivator-HAT complexes, at least composed of Ada2b, e(y)2, Pcaf/Gcn5, Taf10 and Nipped-A/Trrap. Within the SAGA complex, e(y)2, Sgf11, and not/nonstop form an additional subcomplex of SAGA called the DUB module (deubiquitination module). Component of the THO complex, composed of at least e(y)2, HPR1, THO2, THOC5, THOC6 and THOC7. Interacts with e(y)1. Interacts with su(Hw) (via zinc fingers). Interacts with xmas-2; required for localization to the nuclear periphery. Interacts with the nuclear pore complex (NPC).

It is found in the nucleus. Its subcellular location is the nucleoplasm. It localises to the cytoplasm. Functionally, involved in mRNA export coupled transcription activation by association with both the AMEX and the SAGA complexes. The SAGA complex is a multiprotein complex that activates transcription by remodeling chromatin and mediating histone acetylation and deubiquitination. Within the SAGA complex, participates in a subcomplex that specifically deubiquitinates histone H2B. The SAGA complex is recruited to specific gene promoters by activators, where it is required for transcription. Required for nuclear receptor-mediated transactivation. Involved in transcription elongation by recruiting the THO complex onto nascent mRNA. The AMEX complex functions in docking export-competent ribonucleoprotein particles (mRNPs) to the nuclear entrance of the nuclear pore complex (nuclear basket). AMEX participates in mRNA export and accurate chromatin positioning in the nucleus by tethering genes to the nuclear periphery. The protein is Enhancer of yellow 2 transcription factor of Drosophila mojavensis (Fruit fly).